The chain runs to 81 residues: Cytotoxin 1d/1e (81 aa).

An N-terminal signal peptide occupies residues 1–21; sequence MKTLLLTLVVVTIVCLDLGYT. 4 cysteine pairs are disulfide-bonded: Cys-24-Cys-42, Cys-35-Cys-59, Cys-63-Cys-74, and Cys-75-Cys-80.

Belongs to the three-finger toxin family. Short-chain subfamily. Type IA cytotoxin sub-subfamily. As to quaternary structure, monomer in solution; Homodimer and oligomer in the presence of negatively charged lipids forming a pore with a size ranging between 20 and 30 Angstroms. As to expression, expressed by the venom gland.

The protein resides in the secreted. It is found in the target cell membrane. Functionally, shows cytolytic activity on many different cells by forming pore in lipid membranes. In vivo, increases heart rate or kills the animal by cardiac arrest. In addition, it binds to heparin with high affinity, interacts with Kv channel-interacting protein 1 (KCNIP1) in a calcium-independent manner, and binds to integrin alpha-V/beta-3 (ITGAV/ITGB3) with moderate affinity. This is Cytotoxin 1d/1e from Naja atra (Chinese cobra).